Here is a 207-residue protein sequence, read N- to C-terminus: Sodium/potassium-transporting ATPase subunit beta-1-interacting protein 1 (207 aa).

The next 3 helical transmembrane spans lie at 2-22 (GRCD…VAAL), 35-55 (APIL…FGTV), and 62-82 (LILY…IICF). N-linked (GlcNAc...) asparagine glycosylation occurs at Asn-100. The chain crosses the membrane as a helical span at residues 147–167 (VVSSALQVFLALFGFVYACYV).

The protein belongs to the NKAIN family. Interacts with atp1b1 C-terminus.

It is found in the cell membrane. The sequence is that of Sodium/potassium-transporting ATPase subunit beta-1-interacting protein 1 (nkain1) from Danio rerio (Zebrafish).